A 158-amino-acid chain; its full sequence is SsrA-binding protein (158 aa).

Belongs to the SmpB family.

It is found in the cytoplasm. Required for rescue of stalled ribosomes mediated by trans-translation. Binds to transfer-messenger RNA (tmRNA), required for stable association of tmRNA with ribosomes. tmRNA and SmpB together mimic tRNA shape, replacing the anticodon stem-loop with SmpB. tmRNA is encoded by the ssrA gene; the 2 termini fold to resemble tRNA(Ala) and it encodes a 'tag peptide', a short internal open reading frame. During trans-translation Ala-aminoacylated tmRNA acts like a tRNA, entering the A-site of stalled ribosomes, displacing the stalled mRNA. The ribosome then switches to translate the ORF on the tmRNA; the nascent peptide is terminated with the 'tag peptide' encoded by the tmRNA and targeted for degradation. The ribosome is freed to recommence translation, which seems to be the essential function of trans-translation. In Pseudoalteromonas atlantica (strain T6c / ATCC BAA-1087), this protein is SsrA-binding protein.